A 149-amino-acid polypeptide reads, in one-letter code: Transcriptional repressor NrdR (149 aa).

The segment at 3–34 (CPFCSATDTKVIDSRLVAEGHQVRRRRECTEC) is a zinc-finger region. One can recognise an ATP-cone domain in the interval 49–139 (PRVIKRDGTR…VYRAFEDVSE (91 aa)).

Belongs to the NrdR family. It depends on Zn(2+) as a cofactor.

Functionally, negatively regulates transcription of bacterial ribonucleotide reductase nrd genes and operons by binding to NrdR-boxes. This Shewanella sp. (strain MR-4) protein is Transcriptional repressor NrdR.